Here is a 303-residue protein sequence, read N- to C-terminus: Succinate--CoA ligase [ADP-forming] subunit alpha (303 aa).

CoA is bound by residues 20–23 (TGSE), K46, and 108–110 (ITE). Residue Y173 coordinates substrate. Residue H259 is the Tele-phosphohistidine intermediate of the active site.

Belongs to the succinate/malate CoA ligase alpha subunit family. As to quaternary structure, heterotetramer of two alpha and two beta subunits.

It carries out the reaction succinate + ATP + CoA = succinyl-CoA + ADP + phosphate. It catalyses the reaction GTP + succinate + CoA = succinyl-CoA + GDP + phosphate. The protein operates within carbohydrate metabolism; tricarboxylic acid cycle; succinate from succinyl-CoA (ligase route): step 1/1. Functionally, succinyl-CoA synthetase functions in the citric acid cycle (TCA), coupling the hydrolysis of succinyl-CoA to the synthesis of either ATP or GTP and thus represents the only step of substrate-level phosphorylation in the TCA. The alpha subunit of the enzyme binds the substrates coenzyme A and phosphate, while succinate binding and nucleotide specificity is provided by the beta subunit. This is Succinate--CoA ligase [ADP-forming] subunit alpha from Mycobacterium bovis (strain ATCC BAA-935 / AF2122/97).